The chain runs to 101 residues: Small ribosomal subunit protein bS18c (101 aa).

It belongs to the bacterial ribosomal protein bS18 family. As to quaternary structure, part of the 30S ribosomal subunit.

The protein localises to the plastid. It localises to the chloroplast. This is Small ribosomal subunit protein bS18c from Aethionema cordifolium (Lebanon stonecress).